A 2388-amino-acid polypeptide reads, in one-letter code: Highly reducing polyketide synthase Preu1 (2388 aa).

The Ketosynthase family 3 (KS3) domain maps to 7-432 (NDDIAIVGLA…GTNAHVILDD (426 aa)). Residues Cys-180, His-315, and His-355 each act as for beta-ketoacyl synthase activity in the active site. The interval 549–875 (GFVFTGQGAQ…SSVLMRGEDG (327 aa)) is malonyl-CoA:ACP transacylase (MAT) domain. Residue Ser-641 is the For malonyltransferase activity of the active site. Residues 940 to 1074 (HDLLGAPTQD…GLGKIHYRPE (135 aa)) form an N-terminal hotdog fold region. The 317-residue stretch at 940–1256 (HDLLGAPTQD…CRELPNGNSQ (317 aa)) folds into the PKS/mFAS DH domain. The dehydratase (DH) domain stretch occupies residues 941 to 1251 (DLLGAPTQDS…VEGLRCRELP (311 aa)). The active-site Proton acceptor; for dehydratase activity is His-972. Residues 1102–1256 (TASISPVDFY…CRELPNGNSQ (155 aa)) are C-terminal hotdog fold. Asp-1167 (proton donor; for dehydratase activity) is an active-site residue. Residues 1676-1983 (KLPSDARFTS…VPTGLGKAVL (308 aa)) form an enoyl reductase (ER) domain region. Positions 2007 to 2191 (ATYVLAGGLG…AATSVDLGLM (185 aa)) are ketoreductase (KR) domain. The Carrier domain occupies 2303 to 2380 (QANGIVLEAL…ALAEKISKAS (78 aa)). At Ser-2340 the chain carries O-(pantetheine 4'-phosphoryl)serine.

Pantetheine 4'-phosphate is required as a cofactor.

Functionally, highly reducing polyketide synthase; part of a gene cluster that mediates the biosynthesis of a yet unidentified natural product. The protein is Highly reducing polyketide synthase Preu1 of Preussia isomera (Coprophilous fungus).